We begin with the raw amino-acid sequence, 643 residues long: Alpha-dioxygenase PIOX (643 aa).

H167 acts as the Proton acceptor in catalysis. Position 168 (D168) interacts with Ca(2+). Residue H172 coordinates heme b. T220, W222, D224, and S226 together coordinate Ca(2+). Heme b-binding residues include H392, R489, and R493.

This sequence belongs to the peroxidase family. Heme b serves as cofactor. Ca(2+) is required as a cofactor.

The enzyme catalyses a 1,2-saturated fatty acid + O2 = a (2R)-2-hydroperoxy fatty acid. It carries out the reaction (9Z,12Z,15Z)-octadecatrienoate + O2 = (R)-2-hydroperoxy-(9Z,12Z,15Z)-octadecatrienoate. It catalyses the reaction (9Z,12Z)-octadecadienoate + O2 = (2R,9Z,12Z)-2-hydroperoxyoctadecadienoate. In terms of biological role, alpha-dioxygenase that catalyzes the primary oxygenation step of a variety of 14-20 carbon fatty acids, containing up to three unsaturated bonds, into their corresponding 2R-hydroperoxides. Involved in the production of oxylipins that function in cell signaling, wound healing, and protection from infection. This Nicotiana tabacum (Common tobacco) protein is Alpha-dioxygenase PIOX.